A 109-amino-acid chain; its full sequence is Large ribosomal subunit protein uL22 (109 aa).

Belongs to the universal ribosomal protein uL22 family. In terms of assembly, part of the 50S ribosomal subunit.

This protein binds specifically to 23S rRNA; its binding is stimulated by other ribosomal proteins, e.g. L4, L17, and L20. It is important during the early stages of 50S assembly. It makes multiple contacts with different domains of the 23S rRNA in the assembled 50S subunit and ribosome. In terms of biological role, the globular domain of the protein is located near the polypeptide exit tunnel on the outside of the subunit, while an extended beta-hairpin is found that lines the wall of the exit tunnel in the center of the 70S ribosome. The protein is Large ribosomal subunit protein uL22 of Blochmanniella pennsylvanica (strain BPEN).